We begin with the raw amino-acid sequence, 384 residues long: Formate-dependent phosphoribosylglycinamide formyltransferase (384 aa).

N(1)-(5-phospho-beta-D-ribosyl)glycinamide-binding positions include 14–15 and E74; that span reads EL. ATP-binding positions include R106, K147, 152–157, 187–190, and E195; these read SSGKGQ and EEFI. In terms of domain architecture, ATP-grasp spans 111–300; the sequence is RLAAETLHLP…EFALHVRAVL (190 aa). The Mg(2+) site is built by E259 and E271. N(1)-(5-phospho-beta-D-ribosyl)glycinamide-binding positions include D278, K348, and 355 to 356; that span reads RR.

It belongs to the PurK/PurT family. Homodimer.

It carries out the reaction N(1)-(5-phospho-beta-D-ribosyl)glycinamide + formate + ATP = N(2)-formyl-N(1)-(5-phospho-beta-D-ribosyl)glycinamide + ADP + phosphate + H(+). It participates in purine metabolism; IMP biosynthesis via de novo pathway; N(2)-formyl-N(1)-(5-phospho-D-ribosyl)glycinamide from N(1)-(5-phospho-D-ribosyl)glycinamide (formate route): step 1/1. Functionally, involved in the de novo purine biosynthesis. Catalyzes the transfer of formate to 5-phospho-ribosyl-glycinamide (GAR), producing 5-phospho-ribosyl-N-formylglycinamide (FGAR). Formate is provided by PurU via hydrolysis of 10-formyl-tetrahydrofolate. This chain is Formate-dependent phosphoribosylglycinamide formyltransferase, found in Bacillus velezensis (strain DSM 23117 / BGSC 10A6 / LMG 26770 / FZB42) (Bacillus amyloliquefaciens subsp. plantarum).